A 67-amino-acid polypeptide reads, in one-letter code: Protein Tpau_2998 (67 aa).

This is Protein Tpau_2998 from Tsukamurella paurometabola (strain ATCC 8368 / DSM 20162 / CCUG 35730 / CIP 100753 / JCM 10117 / KCTC 9821 / NBRC 16120 / NCIMB 702349 / NCTC 13040) (Corynebacterium paurometabolum).